The primary structure comprises 375 residues: 4,4'-diaponeurosporenoate glycosyltransferase (375 aa).

4 helical membrane passes run 3-23 (WLSRILTVIVTMSMACGALIF), 164-184 (FYEGFSAIFNLMTVVGMNVFS), 277-297 (IMAAIVLWLFGSIASILGLCL), and 330-350 (FSNLLMVCHPLLFMFFTKIFI).

This sequence belongs to the glycosyltransferase 2 family. CrtQ subfamily.

Its subcellular location is the cell membrane. It participates in carotenoid biosynthesis; staphyloxanthin biosynthesis; staphyloxanthin from farnesyl diphosphate: step 4/5. Its function is as follows. Catalyzes the glycosylation of 4,4'-diaponeurosporenoate, i.e. the esterification of glucose at the C1'' position with the carboxyl group of 4,4'-diaponeurosporenic acid, to form glycosyl-4,4'-diaponeurosporenoate. This is a step in the biosynthesis of staphyloxanthin, an orange pigment present in most staphylococci strains. The protein is 4,4'-diaponeurosporenoate glycosyltransferase (crtQ) of Staphylococcus aureus (strain MRSA252).